Consider the following 174-residue polypeptide: Adenylosuccinate synthetase (174 aa).

GTP contacts are provided by residues 13–19 (GDEGKGK) and 41–43 (GHT). Residue Asp-14 is the Proton acceptor of the active site. Mg(2+) is bound by residues Asp-14 and Gly-41. IMP contacts are provided by residues 14 to 17 (DEGK), 39 to 42 (NAGH), Thr-130, and Arg-144. The active-site Proton donor is the His-42.

It belongs to the adenylosuccinate synthetase family. Homodimer. Mg(2+) is required as a cofactor.

It localises to the cytoplasm. It catalyses the reaction IMP + L-aspartate + GTP = N(6)-(1,2-dicarboxyethyl)-AMP + GDP + phosphate + 2 H(+). The protein operates within purine metabolism; AMP biosynthesis via de novo pathway; AMP from IMP: step 1/2. Plays an important role in the de novo pathway of purine nucleotide biosynthesis. Catalyzes the first committed step in the biosynthesis of AMP from IMP. This Stutzerimonas stutzeri (Pseudomonas stutzeri) protein is Adenylosuccinate synthetase.